The following is a 127-amino-acid chain: MICYFLVVTINFLKEKTTICHYFVNIFSLFLFLFVFVFVFIFVYFFYVILFYRFCSLFTYFPANSIWYYLSIINIFFPLCFFLYENFTGRNRRKCSLFCLTLIKITYTSPNHGFMVTGKEKFEKLRD.

Transmembrane regions (helical) follow at residues 29 to 49 and 63 to 83; these read LFLF…FYVI and ANSI…CFFL. Asn86 carries an N-linked (GlcNAc...) asparagine glycan.

The protein resides in the membrane. Required for survival during stationary phase. The polypeptide is Stationary phase protein 3 (SPG3) (Saccharomyces cerevisiae (strain ATCC 204508 / S288c) (Baker's yeast)).